Consider the following 497-residue polypeptide: Glutamate--tRNA ligase (497 aa).

Positions 13–23 (PSPTGTPHVGM) match the 'HIGH' region motif. Positions 257–261 (KLSKR) match the 'KMSKS' region motif. Lysine 260 contacts ATP.

It belongs to the class-I aminoacyl-tRNA synthetase family. Glutamate--tRNA ligase type 1 subfamily. As to quaternary structure, monomer.

The protein localises to the cytoplasm. It carries out the reaction tRNA(Glu) + L-glutamate + ATP = L-glutamyl-tRNA(Glu) + AMP + diphosphate. In terms of biological role, catalyzes the attachment of glutamate to tRNA(Glu) in a two-step reaction: glutamate is first activated by ATP to form Glu-AMP and then transferred to the acceptor end of tRNA(Glu). This is Glutamate--tRNA ligase from Corynebacterium diphtheriae (strain ATCC 700971 / NCTC 13129 / Biotype gravis).